The following is a 426-amino-acid chain: Tryptophan--tRNA ligase (426 aa).

The 'HIGH' region signature appears at 66–74; sequence PSGEMHLGN. The 'KMSKS' region signature appears at 314–318; the sequence is KMSSS.

The protein belongs to the class-I aminoacyl-tRNA synthetase family.

Its subcellular location is the cytoplasm. The enzyme catalyses tRNA(Trp) + L-tryptophan + ATP = L-tryptophyl-tRNA(Trp) + AMP + diphosphate + H(+). This chain is Tryptophan--tRNA ligase, found in Thermoplasma volcanium (strain ATCC 51530 / DSM 4299 / JCM 9571 / NBRC 15438 / GSS1).